A 2113-amino-acid polypeptide reads, in one-letter code: Ninein (2113 aa).

EF-hand domains follow at residues 8–43 (QHEA…LCLE) and 42–77 (LEDV…ILSR). S152 is subject to Phosphoserine. EF-hand domains are found at residues 182–217 (WIEE…YGLQ) and 219–252 (VDGA…TGKS). 245–252 (GLFKTGKS) serves as a coordination point for GTP. Position 269 is a phosphoserine (S269). 300 to 304 (DGMGQ) is a binding site for GTP. Residues 317–352 (EGIENSQEILKALDFSLDGNINLTELTLALENELLV) enclose the EF-hand 5 domain. Residues 358 to 570 (HQAALASFKA…YQAQGRVLRL (213 aa)) adopt a coiled-coil conformation. 420-423 (RKLD) lines the GTP pocket. The tract at residues 578–599 (EELDGHSGGIEPDQGPGSEECN) is disordered. 4 coiled-coil regions span residues 620–926 (RDLC…ESQH), 958–1008 (EQLA…STEI), 1175–1323 (EDTR…MEKV), and 1425–1806 (AALL…IDKD). The segment at 798–1495 (EMETECNRRV…QDLQITCGEM (698 aa)) is important for interaction with CEP170. A phosphoserine mark is found at S1540 and S1826. Coiled coils occupy residues 1852–1910 (VQNT…KEQS) and 1971–2093 (REQF…IASL). Disordered stretches follow at residues 1899–1922 (KREC…MGSL) and 1988–2008 (SQHL…PQGN). The span at 1988 to 1999 (SQHLQEELENRT) shows a compositional bias: basic and acidic residues.

As to quaternary structure, homooligomer. Interacts with GSK3B/GSK3-beta via its C-terminal domain. Interacts with C14ORF166, such interaction may prevent its phosphorylation by GSK3B. Interacts with AUNIP (via N-terminus). Identified in a complex with AUNIP and AURKA. Interacts with CCDC120. Interacts (via C-terminus) with CEP250. Interacts with CEP170. Interacts (via N-terminus) with the gamma-tubulin ring complex component TUBGCP3. Interacts with gamma-tubulin. Isoform 4 does not interact with CEP170 or CEP250. Post-translationally, phosphorylated by AURKA/Aurora kinase A and PKA kinases but not CK2 or AURKB/Aurora kinase B. Widely expressed. Highly expressed in spleen, bone marrow and skin. Weakly expressed in liver and small intestine. Expressed in brain.

The protein resides in the cytoplasm. It localises to the cytoskeleton. It is found in the microtubule organizing center. The protein localises to the centrosome. Its subcellular location is the centriole. In terms of biological role, centrosomal protein required for the positioning and anchorage of the microtubule minus-end in epithelial cells. May also act as a centrosome maturation factor. May play a role in microtubule nucleation, by recruiting the gamma-tubulin ring complex to the centrosome. Overexpression does not perturb nucleation or elongation of microtubules but suppresses release of microtubules. Required for centriole organization and microtubule anchoring at the mother centriole. The polypeptide is Ninein (Mus musculus (Mouse)).